The chain runs to 218 residues: Probable signal peptidase I-2 (218 aa).

At 1–26 the chain is on the cytoplasmic side; the sequence is MTENIVRETSKKKESPPENTWLELGK. The helical transmembrane segment at 27–43 threads the bilayer; the sequence is TMVTAVILAIGIRTFVA. The Periplasmic portion of the chain corresponds to 44–218; that stretch reads EARYIPSSSM…ISPQTVPESR (175 aa). Residues Ser-52 and Lys-100 contribute to the active site.

The protein belongs to the peptidase S26 family.

It is found in the cell membrane. It carries out the reaction Cleavage of hydrophobic, N-terminal signal or leader sequences from secreted and periplasmic proteins.. This is Probable signal peptidase I-2 (lepB2) from Synechocystis sp. (strain ATCC 27184 / PCC 6803 / Kazusa).